Here is a 358-residue protein sequence, read N- to C-terminus: C-X-C chemokine receptor type 4 (358 aa).

The tract at residues 1-25 (MDGFSGGIDINIFDSNSTENGSGDF) is important for chemokine binding and signaling. Topologically, residues 1–44 (MDGFSGGIDINIFDSNSTENGSGDFEDFSEPCFMHDNSDFNRIF) are extracellular. Asn-16 and Asn-20 each carry an N-linked (GlcNAc...) asparagine glycan. 2 disulfide bridges follow: Cys-32–Cys-281 and Cys-113–Cys-190. The helical transmembrane segment at 45–67 (LPTIYSFIFLLGIIGNGLVVVVM) threads the bilayer. The Cytoplasmic segment spans residues 68–81 (GYQKKSRTMTDKYR). A helical transmembrane segment spans residues 82-103 (LHLSVADLLFVFTLPFWSVDAA). The tract at residues 98–101 (WSVD) is chemokine binding. Over 104-114 (IGWYFKEFLCK) the chain is Extracellular. The chain crosses the membrane as a helical span at residues 115–134 (AVHVIYTVNLYSSVLILAFI). Positions 117 to 121 (HVIYT) are chemokine binding. Residues 135–158 (SLDRYLAIVHATNSQGSRKMLADK) are Cytoplasmic-facing. The interval 139–151 (YLAIVHATNSQGS) is involved in dimerization; when bound to chemokine. Residues 159-178 (VVYAGVWLPALLLTVPDLVF) form a helical membrane-spanning segment. Topologically, residues 179-202 (ARVSDENGQFVCDRIYPIDNRETW) are extracellular. Positions 190–194 (CDRIY) are chemokine binding, important for signaling. Residues 203 to 223 (TVGFRFLHITVGLILPGLIIL) form a helical membrane-spanning segment. The Cytoplasmic segment spans residues 224-248 (ICYCVIISKLSHSKGHQKRKALKTT). The helical transmembrane segment at 249-268 (VILILAFFACWLPYYVCLTT) threads the bilayer. Over 269–289 (DTFMLLGLLKADCIWENTLHK) the chain is Extracellular. A helical membrane pass occupies residues 290-309 (AISITEALAFFHCCLNPILY). Residues 310 to 358 (AFLGAKFKTSAQNAFTSVSRGSSLKILSKKRAGLSSVSTESESSSFHSS) are Cytoplasmic-facing. Residues 338 to 358 (KKRAGLSSVSTESESSSFHSS) are disordered. The span at 344–358 (SSVSTESESSSFHSS) shows a compositional bias: low complexity.

The protein belongs to the G-protein coupled receptor 1 family. In terms of assembly, monomer. Can form dimers. Post-translationally, sulfation is required for efficient binding of cxcl12/sdf-1alpha and promotes its dimerization. In terms of processing, O- and N-glycosylated.

Its subcellular location is the cell membrane. The protein resides in the cytoplasm. It is found in the nucleus. The protein localises to the early endosome. It localises to the late endosome. Its subcellular location is the lysosome. Its function is as follows. Receptor for the C-X-C chemokine cxcl12/sdf-1. Transduces a signal by increasing the intracellular calcium ion level. Signaling with cxcl12/sdf-1 mediates the directional movement of mesodermal cells during gastrulation. May play a role in the migration of embryonic presumptive primordial germ cells (pPGCs). May also be involved in regulating migration of hematopoietic stem cells into the larval liver. The sequence is that of C-X-C chemokine receptor type 4 from Xenopus tropicalis (Western clawed frog).